The primary structure comprises 91 residues: Small ribosomal subunit protein uS19 (91 aa).

It belongs to the universal ribosomal protein uS19 family.

Its function is as follows. Protein S19 forms a complex with S13 that binds strongly to the 16S ribosomal RNA. This is Small ribosomal subunit protein uS19 from Psychrobacter sp. (strain PRwf-1).